A 457-amino-acid chain; its full sequence is Argininosuccinate lyase (457 aa).

This sequence belongs to the lyase 1 family. Argininosuccinate lyase subfamily.

The protein localises to the cytoplasm. It catalyses the reaction 2-(N(omega)-L-arginino)succinate = fumarate + L-arginine. The protein operates within amino-acid biosynthesis; L-arginine biosynthesis; L-arginine from L-ornithine and carbamoyl phosphate: step 3/3. In Citrobacter koseri (strain ATCC BAA-895 / CDC 4225-83 / SGSC4696), this protein is Argininosuccinate lyase.